Here is a 207-residue protein sequence, read N- to C-terminus: MADS-box protein AGL71 (207 aa).

The MADS-box domain occupies 1 to 61; the sequence is MVRGKIEIKK…GRLHEYSSSQ (61 aa). Residues 88-178 form the K-box domain; the sequence is LQELKMEIDR…LEEVNMHHSS (91 aa).

The protein localises to the nucleus. In terms of biological role, MADS-box transcription factor that acts with AGL42 and AGL72 in the control of flowering time. Promotes flowering at the shoot apical and axillary meristems. Seems to act through a gibberellin-dependent pathway. Interacts genetically with SOC1 and its expression is directly regulated by SOC1. The sequence is that of MADS-box protein AGL71 (AGL71) from Arabidopsis thaliana (Mouse-ear cress).